The following is an 836-amino-acid chain: CUB domain-containing protein 1 (836 aa).

Residues 1–29 form the signal peptide; sequence MAGLNCGVSIALLGVLLLGAARLPRGAEA. The Extracellular segment spans residues 30 to 667; that stretch reads FEIALPRESN…TLTPRTVDLT (638 aa). Asn-39, Asn-122, Asn-180, Asn-205, Asn-270, Asn-310, and Asn-386 each carry an N-linked (GlcNAc...) asparagine glycan. The CUB domain maps to 417–544; it reads CTDHRYCQRK…VSFIPYFKEE (128 aa). A disulfide bridge connects residues Cys-476 and Cys-499. A helical transmembrane segment spans residues 668–688; the sequence is VILIAAVGGGVLLLSALGLII. Residues 689–836 lie on the Cytoplasmic side of the membrane; the sequence is CCVKKKKKKT…NTQEPMEPAE (148 aa). Position 734 is a phosphotyrosine (Tyr-734). Residues 776–836 form a disordered region; the sequence is PPTICSRAPT…NTQEPMEPAE (61 aa).

As to quaternary structure, interacts with CDH2/N-cadherin, CDH3/P-cadherin, SDC1/syndecan-1, SDC4/syndecan-4 and the serine protease ST14/MT-SP1. Also interacts with SRC and PRKCG/protein kinase C gamma. In terms of processing, phosphorylated on tyrosine by kinases of the SRC family such as SRC and YES as well as by the protein kinase C gamma/PRKCG. Dephosphorylated by phosphotyrosine phosphatases. Also phosphorylated by suramin, a heparin analog. Tyrosine phosphorylated in response to dissociation of integrin alpha-6 beta-4 from laminin-5. N-glycosylated. Post-translationally, a soluble form may also be produced by proteolytic cleavage at the cell surface (shedding). Another peptide of 80 kDa (p80) is present in cultured keratinocytes probably due to tryptic cleavage at an unidentified site on its N-terminal side. Converted to p80 by plasmin, a trypsin-like protease. As to expression, highly expressed in mitotic cells with low expression during interphase. Detected at highest levels in skeletal muscle and colon with lower levels in kidney, small intestine, placenta and lung. Up-regulated in a number of human tumor cell lines, as well as in colorectal cancer, breast carcinoma and lung cancer. Also expressed in cells with phenotypes reminiscent of mesenchymal stem cells and neural stem cells.

It is found in the cell membrane. It localises to the secreted. In terms of biological role, may be involved in cell adhesion and cell matrix association. May play a role in the regulation of anchorage versus migration or proliferation versus differentiation via its phosphorylation. May be a novel marker for leukemia diagnosis and for immature hematopoietic stem cell subsets. Belongs to the tetraspanin web involved in tumor progression and metastasis. This Homo sapiens (Human) protein is CUB domain-containing protein 1 (CDCP1).